Here is a 462-residue protein sequence, read N- to C-terminus: Cysteine--tRNA ligase (462 aa).

Cysteine 29 is a binding site for Zn(2+). The 'HIGH' region signature appears at 31–41 (MTVYDLCHLGH). Zn(2+) contacts are provided by cysteine 217, histidine 242, and glutamate 246. The short motif at 274–278 (KMSKS) is the 'KMSKS' region element. Lysine 277 is an ATP binding site.

Belongs to the class-I aminoacyl-tRNA synthetase family. Monomer. Zn(2+) is required as a cofactor.

The protein localises to the cytoplasm. The enzyme catalyses tRNA(Cys) + L-cysteine + ATP = L-cysteinyl-tRNA(Cys) + AMP + diphosphate. This chain is Cysteine--tRNA ligase, found in Polaromonas sp. (strain JS666 / ATCC BAA-500).